The primary structure comprises 418 residues: Thyroid hormone receptor alpha (418 aa).

The segment at 1 to 41 is disordered; the sequence is MDQNLSGLDCLSEPDEKRWPDGKRKRKNSQCMGKSGMSGDS. The modulating stretch occupies residues 1–60; that stretch reads MDQNLSGLDCLSEPDEKRWPDGKRKRKNSQCMGKSGMSGDSSVSLLSAGYIPSYLTKDEP. The Zn(2+) site is built by C61, C64, C78, C81, C99, C105, C115, and C118. 2 NR C4-type zinc fingers span residues 61–81 and 99–123; these read CVVC…CEGC and CKYD…FKKC. Residues 61 to 135 constitute a DNA-binding region (nuclear receptor); it reads CVVCSDKATG…VGMAMDLVLD (75 aa). In terms of domain architecture, NR LBD spans 171–415; that stretch reads EEWELIRIVT…PPLFLEVFED (245 aa). 2 residues coordinate 3,3',5-triiodo-L-thyronine: R236 and S285.

It belongs to the nuclear hormone receptor family. NR1 subfamily. As to expression, highest level of expression in erythrocytes. Also expressed in liver, tail, eye, muscle and skin.

The protein localises to the nucleus. In terms of biological role, nuclear hormone receptor that can act as a repressor or activator of transcription. High affinity receptor for thyroid hormones, including triiodothyronine and thyroxine. The sequence is that of Thyroid hormone receptor alpha (thra) from Aquarana catesbeiana (American bullfrog).